Consider the following 215-residue polypeptide: Probable phosphoglycerate mutase GpmB (215 aa).

Residues 8–15, 21–22, arginine 58, arginine 60, 82–85, 104–105, and 151–152 each bind substrate; these read RHGETQWN, QG, ELNM, RR, and GI. Histidine 9 serves as the catalytic Tele-phosphohistidine intermediate. The active-site Proton donor/acceptor is glutamate 82.

It belongs to the phosphoglycerate mutase family. GpmB subfamily.

It carries out the reaction (2R)-2-phosphoglycerate = (2R)-3-phosphoglycerate. It functions in the pathway carbohydrate degradation; glycolysis; pyruvate from D-glyceraldehyde 3-phosphate: step 3/5. This chain is Probable phosphoglycerate mutase GpmB, found in Shigella boydii serotype 18 (strain CDC 3083-94 / BS512).